A 459-amino-acid polypeptide reads, in one-letter code: Elongation factor 1-alpha (459 aa).

Glycine 2 bears the N,N,N-trimethylglycine mark. Lysine 3 bears the N6,N6-dimethyllysine; alternate mark. Lysine 3 is modified (N6-methyllysine; alternate). Residues 5–240 enclose the tr-type G domain; that stretch reads KTHVNVVVIG…DAVDPPTRPS (236 aa). The segment at 14 to 21 is G1; the sequence is GHVDSGKS. Residue 14-21 coordinates GTP; sequence GHVDSGKS. Lysine 30 carries the N6-methyllysine modification. The G2 stretch occupies residues 70–74; it reads VITID. An N6,N6,N6-trimethyllysine modification is found at lysine 79. Residues 91-94 are G3; sequence DAPG. GTP is bound by residues 91 to 95 and 153 to 156; these read DAPGH and NKMD. Residues 153 to 156 are G4; sequence NKMD. The G5 stretch occupies residues 192–194; the sequence is SGW. Lysine 316 is modified (N6,N6-dimethyllysine; alternate). An N6-methyllysine; alternate modification is found at lysine 316. At lysine 390 the chain carries N6-methyllysine.

The protein belongs to the TRAFAC class translation factor GTPase superfamily. Classic translation factor GTPase family. EF-Tu/EF-1A subfamily.

It is found in the cytoplasm. This protein promotes the GTP-dependent binding of aminoacyl-tRNA to the A-site of ribosomes during protein biosynthesis. In Blastobotrys adeninivorans (Yeast), this protein is Elongation factor 1-alpha (TEF).